Reading from the N-terminus, the 317-residue chain is Trem-like transcript 1 protein (317 aa).

The signal sequence occupies residues 1–20 (MDCYLLLLLLLLGLAGQGSA). In terms of domain architecture, Ig-like V-type spans 21-122 (DSHPEVLQAP…PQTLHRVSLL (102 aa)). The Extracellular portion of the chain corresponds to 21-175 (DSHPEVLQAP…EFRRRENSIP (155 aa)). 2 cysteine pairs are disulfide-bonded: Cys39–Cys105 and Cys53–Cys60. The interval 147–166 (TGSLLEDPSLDPSASAGPHE) is disordered. Residues 176–196 (LIWGAVLLLALVVVAVVIFAV) traverse the membrane as a helical segment. Over 197–317 (MARKKGNRLV…PPNSQTPPSK (121 aa)) the chain is Cytoplasmic. A lipid anchor (S-palmitoyl cysteine) is attached at Cys208. Positions 212-278 (QSTGVPGMDP…SQPPLPPKVL (67 aa)) are disordered. A compositionally biased stretch (pro residues) spans 261–275 (SSEPPAPPSQPPLPP). Position 283 is a phosphoserine (Ser283). Positions 284–289 (VTYATV) match the ITIM motif. Residues 295-317 (DKGKIASCEPVQDPPNSQTPPSK) are disordered. Positions 308-317 (PPNSQTPPSK) are enriched in polar residues.

In terms of assembly, when phosphorylated, interacts with PTPN11. When phosphorylated, interacts with PTPN6. Phosphorylated on tyrosine residues. As to expression, highly expressed in bone marrow leukocytes, splenic megakaryocytes and platelets. Detected in brain, liver and in peritoneal monocytes.

It localises to the cell membrane. Its subcellular location is the cytoplasm. Its function is as follows. Cell surface receptor that may play a role in the innate and adaptive immune response. The protein is Trem-like transcript 1 protein (Treml1) of Mus musculus (Mouse).